The sequence spans 255 residues: 1-(5-phosphoribosyl)-5-[(5-phosphoribosylamino)methylideneamino] imidazole-4-carboxamide isomerase (255 aa).

Asp8 functions as the Proton acceptor in the catalytic mechanism. Asp129 serves as the catalytic Proton donor.

The protein belongs to the HisA/HisF family.

It localises to the cytoplasm. It carries out the reaction 1-(5-phospho-beta-D-ribosyl)-5-[(5-phospho-beta-D-ribosylamino)methylideneamino]imidazole-4-carboxamide = 5-[(5-phospho-1-deoxy-D-ribulos-1-ylimino)methylamino]-1-(5-phospho-beta-D-ribosyl)imidazole-4-carboxamide. It functions in the pathway amino-acid biosynthesis; L-histidine biosynthesis; L-histidine from 5-phospho-alpha-D-ribose 1-diphosphate: step 4/9. This is 1-(5-phosphoribosyl)-5-[(5-phosphoribosylamino)methylideneamino] imidazole-4-carboxamide isomerase from Parasynechococcus marenigrum (strain WH8102).